The following is a 128-amino-acid chain: Entry-fusion complex protein OPG094 (128 aa).

Topologically, residues methionine 1–leucine 30 are intravirion. Residues isoleucine 31–leucine 51 traverse the membrane as a helical; Signal-anchor for type III membrane protein segment. Residues asparagine 52–cysteine 107 are Virion surface-facing. Residues cysteine 75 and cysteine 107 are joined by a disulfide bond.

It belongs to the orthopoxvirus OPG099 family. Interacts with OPG086. Component of the entry fusion complex (EFC) composed of OPG053, OPG076, OPG086, OPG094, OPG095, OPG099, OPG107, OPG143, OPG104J5, OPG147 and OPG155. Except for OPG095 and OPG053, each of the EFC proteins is required for assembly or stability of the complex. In terms of processing, most cysteines are linked by disulfide bonds. They are created by the viral disulfide bond formation pathway, a poxvirus-specific redox pathway that operates on the cytoplasmic side of the MV membranes. Unglycosylated because produced in viral factories instead of the classic ER -Golgi route.

It localises to the virion membrane. In terms of biological role, component of the entry fusion complex (EFC), which consists of 11 proteins. During cell infection, this complex mediates entry of the virion core into the host cytoplasm by a two-step mechanism consisting of lipid mixing of the viral and cellular membranes and subsequent pore formation. The sequence is that of Entry-fusion complex protein OPG094 (OPG099) from Homo sapiens (Human).